The following is a 610-amino-acid chain: UvrABC system protein C (610 aa).

The GIY-YIG domain maps to 19-97 (GAPGVYKMLD…IKRHKPRYNI (79 aa)). Residues 207 to 242 (EALIDRLAQRMEQAAQRLEFEKAARYRDQISNLRTV) form the UVR domain.

This sequence belongs to the UvrC family. Interacts with UvrB in an incision complex.

Its subcellular location is the cytoplasm. The UvrABC repair system catalyzes the recognition and processing of DNA lesions. UvrC both incises the 5' and 3' sides of the lesion. The N-terminal half is responsible for the 3' incision and the C-terminal half is responsible for the 5' incision. The sequence is that of UvrABC system protein C from Methylococcus capsulatus (strain ATCC 33009 / NCIMB 11132 / Bath).